Here is an 82-residue protein sequence, read N- to C-terminus: Musculoskeletal embryonic nuclear protein 1 (82 aa).

Positions 1–34 are disordered; that stretch reads MSQAGAQEAPIKKKRPPVKEEDLKGARGNLTKNQ. S2 carries the post-translational modification Phosphoserine. Positions 10-18 match the Nuclear localization signal motif; it reads PIKKKRPPV.

Belongs to the MUSTN1 family.

It localises to the nucleus. Its subcellular location is the cytoplasm. The protein resides in the secreted. The protein localises to the extracellular space. In terms of biological role, required for chondrocyte development and proliferation. Plays a role in myoblast differentiation and fusion. Modulates skeletal muscle extracellular matrix composition. Plays a role in skeletal muscle function. Plays a role in glucose homeostasis. This chain is Musculoskeletal embryonic nuclear protein 1 (MUSTN1), found in Bos taurus (Bovine).